The primary structure comprises 409 residues: Tyrosine--tRNA ligase (409 aa).

The 'HIGH' region motif lies at 43-52; sequence PTAPDLHLGH. The 'KMSKS' region motif lies at 227-231; sequence KMSKS. K230 is a binding site for ATP. The S4 RNA-binding domain occupies 338-399; that stretch reads LALPQLLKLA…GKRKFAKVTL (62 aa).

Belongs to the class-I aminoacyl-tRNA synthetase family. TyrS type 2 subfamily. As to quaternary structure, homodimer.

The protein resides in the cytoplasm. It carries out the reaction tRNA(Tyr) + L-tyrosine + ATP = L-tyrosyl-tRNA(Tyr) + AMP + diphosphate + H(+). Its function is as follows. Catalyzes the attachment of tyrosine to tRNA(Tyr) in a two-step reaction: tyrosine is first activated by ATP to form Tyr-AMP and then transferred to the acceptor end of tRNA(Tyr). The sequence is that of Tyrosine--tRNA ligase from Nitrosomonas europaea (strain ATCC 19718 / CIP 103999 / KCTC 2705 / NBRC 14298).